We begin with the raw amino-acid sequence, 146 residues long: Hemoglobin subunit beta (146 aa).

Residue valine 1 is modified to N-acetylvaline. Positions 2-146 (HLTDAEKAAI…VATALGHKYH (145 aa)) constitute a Globin domain. Lysine 59 bears the N6-acetyllysine mark. Histidine 63 is a heme b binding site. Position 82 is an N6-acetyllysine (lysine 82). Histidine 92 is a binding site for heme b. Cysteine 93 carries the S-nitrosocysteine modification. Position 144 is an N6-acetyllysine (lysine 144).

The protein belongs to the globin family. In terms of assembly, heterotetramer of two alpha chains and two beta chains. Red blood cells.

Involved in oxygen transport from the lung to the various peripheral tissues. In Ondatra zibethicus (Muskrat), this protein is Hemoglobin subunit beta (HBB).